The primary structure comprises 154 residues: Ribosomal RNA large subunit methyltransferase H (154 aa).

Residues leucine 70, glycine 102, and 121–126 (LSRMTL) contribute to the S-adenosyl-L-methionine site.

The protein belongs to the RNA methyltransferase RlmH family. Homodimer.

The protein resides in the cytoplasm. The catalysed reaction is pseudouridine(1915) in 23S rRNA + S-adenosyl-L-methionine = N(3)-methylpseudouridine(1915) in 23S rRNA + S-adenosyl-L-homocysteine + H(+). In terms of biological role, specifically methylates the pseudouridine at position 1915 (m3Psi1915) in 23S rRNA. The protein is Ribosomal RNA large subunit methyltransferase H of Geobacter sp. (strain M21).